The sequence spans 819 residues: Phenylalanine--tRNA ligase beta subunit (819 aa).

The tRNA-binding domain occupies 42-154 (RGGLRGLVIG…SDAPVGMPAA (113 aa)). Residues 412-488 (LKPHLISLSF…RIYGYNQVEL (77 aa)) enclose the B5 domain. Mg(2+)-binding residues include aspartate 466, aspartate 472, glutamate 475, and glutamate 476. An FDX-ACB domain is found at 726 to 819 (PRFPEVKRDL…LEQKLGAQLR (94 aa)).

This sequence belongs to the phenylalanyl-tRNA synthetase beta subunit family. Type 1 subfamily. As to quaternary structure, tetramer of two alpha and two beta subunits. Requires Mg(2+) as cofactor.

It is found in the cytoplasm. It carries out the reaction tRNA(Phe) + L-phenylalanine + ATP = L-phenylalanyl-tRNA(Phe) + AMP + diphosphate + H(+). The chain is Phenylalanine--tRNA ligase beta subunit from Porphyromonas gingivalis (strain ATCC BAA-308 / W83).